A 56-amino-acid chain; its full sequence is Large ribosomal subunit protein bL33C (56 aa).

This sequence belongs to the bacterial ribosomal protein bL33 family.

This Sorangium cellulosum (strain So ce56) (Polyangium cellulosum (strain So ce56)) protein is Large ribosomal subunit protein bL33C.